The following is a 95-amino-acid chain: Protein TusB (95 aa).

Belongs to the DsrH/TusB family. Heterohexamer, formed by a dimer of trimers. The hexameric TusBCD complex contains 2 copies each of TusB, TusC and TusD. The TusBCD complex interacts with TusE.

Its subcellular location is the cytoplasm. Its function is as follows. Part of a sulfur-relay system required for 2-thiolation of 5-methylaminomethyl-2-thiouridine (mnm(5)s(2)U) at tRNA wobble positions. The polypeptide is Protein TusB (Pectobacterium atrosepticum (strain SCRI 1043 / ATCC BAA-672) (Erwinia carotovora subsp. atroseptica)).